Consider the following 256-residue polypeptide: CD209 antigen-like protein 2 (256 aa).

At 1–50 (MSDSKEPRAQPLGLLEEEELITSSMNFFPRDFGFRQTRGYKSLAGCLGHA) the chain is on the cytoplasmic side. The short motif at 14-15 (LL) is the Endocytosis signal element. A helical; Signal-anchor for type II membrane protein membrane pass occupies residues 51–71 (PLVLPLLFFTLFTGLLVAILV). At 72–240 (QVSKNPSSQR…KSAASCSRDE (169 aa)) the chain is on the extracellular side. Cystine bridges form between Cys-108/Cys-119, Cys-136/Cys-229, and Cys-208/Cys-221. Residues 114–230 (FFQGNCYFIS…CSAAKFWICK (117 aa)) enclose the C-type lectin domain. Ca(2+) is bound by residues Glu-199, Asn-201, Ile-203, Glu-206, Asn-217, and Asp-218.

As to expression, predominantly expressed in liver and axillary lymph nodes. At very low levels also found in other tissues.

Its subcellular location is the membrane. Functionally, probable pathogen-recognition receptor involved in peripheral immune surveillance in liver. May mediate the endocytosis of pathogens which are subsequently degraded in lysosomal compartments. Probably recognizes in a calcium-dependent manner high mannose N-linked oligosaccharides in a variety of pathogen antigens. Is a receptor for ICAM3, probably by binding to mannose-like carbohydrates. The sequence is that of CD209 antigen-like protein 2 (CD209L2) from Macaca mulatta (Rhesus macaque).